Consider the following 270-residue polypeptide: Bis(5'-nucleosyl)-tetraphosphatase, symmetrical (270 aa).

The protein belongs to the Ap4A hydrolase family.

The catalysed reaction is P(1),P(4)-bis(5'-adenosyl) tetraphosphate + H2O = 2 ADP + 2 H(+). In terms of biological role, hydrolyzes diadenosine 5',5'''-P1,P4-tetraphosphate to yield ADP. This Actinobacillus pleuropneumoniae serotype 5b (strain L20) protein is Bis(5'-nucleosyl)-tetraphosphatase, symmetrical.